A 267-amino-acid chain; its full sequence is Protein TIFY 7 (267 aa).

In terms of domain architecture, Tify spans 113-148; it reads SSGSSPQLTIFYGGTISVFNDISPDKAQAIMLCAGN. Positions 220–244 match the Jas motif; the sequence is PQARKASLARFLEKRKERLMSAMPY. A Nuclear localization signal motif is present at residues 222–229; sequence ARKASLAR.

It belongs to the TIFY/JAZ family. In terms of assembly, homo- and heterodimer. Interacts with MYC2, MYC3, MYC4, COI1, AFPH2/NINJA, TIFY10A/JAZ1, TIFY10B/JAZ2, TIFY6B/JAZ3, TIFY5A/JAZ8, TIFY9/JAZ10 and TIFY3A/JAZ11. Interacts with RHD6 and RSL1. Post-translationally, ubiquitinated. Targeted for degradation by the SCF(COI1) E3 ubiquitin ligase-proteasome pathway during jasmonate signaling.

Its subcellular location is the nucleus. Its function is as follows. Repressor of jasmonate responses. Jasmonoyl-isoleucine (JA-Ile) specifically promotes COI1-TIFY7/JAZ9 interaction. Interacts with and suppresses RHD6 and RSL1 transcription factor activities to negatively regulate jasmonate-stimulated root hair development. The protein is Protein TIFY 7 (TIFY7) of Arabidopsis thaliana (Mouse-ear cress).